Consider the following 536-residue polypeptide: MTLLALKEDRPTPKAVYNWRVYTCAAIASFASCMIGYDSSFIGTTLALPSFTKEFDFASYTPGALALLQSNIVSVYQAGAFFGSLFAFATSYFLGRRRSLIAFSVVFIIGAAIMLAADGQRRGVDPIIAGRVLAGIGVGGASNMVPIYISELAPPAVRGRLVGIYELGWQIGGLVGFWINYGVNTTMAPTRSQWLIPFAVQLIPAGLLFLGSFWIPESPRWLFANGRREEAIKVLCWIRNLEPTDRYIVEEISYIDADLQRYAREVGKGFWKPFLSLKQPKVRWRFFLGGMLFLWQNGSGINAINYYSPTVFRSIGITGTNTGFLTTGIFGVVKMVLTIIWLLWLVDLVGRRRILFVGATGGSLCMWFIGAYIKIAGPGTTKTEEAKLTSGGIAAIFFFYLWTAFYTPSWNGTPWVINSEMFDQNTRSLGQASAAANNWFWNFIISRFTPQMFIKMEYGVYFFFASLMLLSVVFIYFFIPETKSIPLEAMDRLFAIKSVHNANKILMDELNFDRNPEREQSSLDEKDRVTQTENAV.

Over 1 to 26 the chain is Cytoplasmic; sequence MTLLALKEDRPTPKAVYNWRVYTCAA. The helical transmembrane segment at 27 to 47 threads the bilayer; it reads IASFASCMIGYDSSFIGTTLA. At 48 to 74 the chain is on the extracellular side; it reads LPSFTKEFDFASYTPGALALLQSNIVS. A helical transmembrane segment spans residues 75 to 95; sequence VYQAGAFFGSLFAFATSYFLG. Over 96–98 the chain is Cytoplasmic; sequence RRR. Residues 99-119 traverse the membrane as a helical segment; the sequence is SLIAFSVVFIIGAAIMLAADG. At 120–131 the chain is on the extracellular side; it reads QRRGVDPIIAGR. Residues 132–152 traverse the membrane as a helical segment; that stretch reads VLAGIGVGGASNMVPIYISEL. The Cytoplasmic segment spans residues 153–160; the sequence is APPAVRGR. The chain crosses the membrane as a helical span at residues 161-181; the sequence is LVGIYELGWQIGGLVGFWINY. Topologically, residues 182–195 are extracellular; that stretch reads GVNTTMAPTRSQWL. A glycan (N-linked (GlcNAc...) asparagine) is linked at Asn-184. Residues 196 to 216 traverse the membrane as a helical segment; it reads IPFAVQLIPAGLLFLGSFWIP. The Cytoplasmic segment spans residues 217–285; that stretch reads ESPRWLFANG…SLKQPKVRWR (69 aa). Residues 286–306 traverse the membrane as a helical segment; that stretch reads FFLGGMLFLWQNGSGINAINY. Over 307–327 the chain is Extracellular; that stretch reads YSPTVFRSIGITGTNTGFLTT. The chain crosses the membrane as a helical span at residues 328 to 349; sequence GIFGVVKMVLTIIWLLWLVDLV. At 350–352 the chain is on the cytoplasmic side; that stretch reads GRR. A helical membrane pass occupies residues 353–373; sequence RILFVGATGGSLCMWFIGAYI. Residues 374 to 389 lie on the Extracellular side of the membrane; sequence KIAGPGTTKTEEAKLT. A helical transmembrane segment spans residues 390–410; sequence SGGIAAIFFFYLWTAFYTPSW. The Cytoplasmic segment spans residues 411–435; the sequence is NGTPWVINSEMFDQNTRSLGQASAA. The chain crosses the membrane as a helical span at residues 436-456; it reads ANNWFWNFIISRFTPQMFIKM. The Extracellular portion of the chain corresponds to 457 to 458; sequence EY. A helical membrane pass occupies residues 459–479; that stretch reads GVYFFFASLMLLSVVFIYFFI. Over 480–536 the chain is Cytoplasmic; sequence PETKSIPLEAMDRLFAIKSVHNANKILMDELNFDRNPEREQSSLDEKDRVTQTENAV. Residues 516–530 show a composition bias toward basic and acidic residues; that stretch reads PEREQSSLDEKDRVT. A disordered region spans residues 516 to 536; the sequence is PEREQSSLDEKDRVTQTENAV.

Belongs to the major facilitator superfamily. Sugar transporter (TC 2.A.1.1) family.

It is found in the membrane. This chain is Quinate permease (qa-y), found in Neurospora africana.